The primary structure comprises 502 residues: MKKGPVLLAVLDGYGFSKDTKGNAILNAKTPFMDNLVKEYDHCYIEASGEYVGLPDGQIGNSEVGHLTIGAGRIVYTGLSLINQDIKTKKFDSNKTLLEAINHAKKNNSNIHIMGLLSPGGVHSNEQHIFEMIRIVSENGLKPVIHVFGDGRDVAPQSIISSLERLNDVLKKYPGTIATISGRFYSMDRDKRWERTKQAYDNLLGISNNYFDNPIDYVNKQYSENIFDEFLVPARINDSNVVIKDNDAVIHANFRPDRARQISHLFCGSTVYEEKNDHPLKNLYYAIMMTYEGITPTSILFPTVVVKNTFGEVVANSGLTQLRIAETEKYAHVTFFFDGGVEVDLKNESKILVDSKKVKTYDEVPAMSAVEITDKLIENLDKFDVIVLNFANADMVGHTGKYNEAVLAIEALDSQLARIDQKIKELNGTMFITADHGNAEVMLDDDNNPVTKHTTNPVIFISNNKDVKFNKPGSLGNVAPTILDFMGLEIPADMDKKSLLKK.

Mn(2+) is bound by residues Asp-12 and Ser-62. The active-site Phosphoserine intermediate is the Ser-62. Substrate contacts are provided by residues His-123, 152 to 153 (RD), Arg-183, Arg-189, 255 to 258 (RPDR), and Lys-329. Residues Asp-394, His-398, Asp-435, His-436, and His-453 each contribute to the Mn(2+) site.

This sequence belongs to the BPG-independent phosphoglycerate mutase family. As to quaternary structure, monomer. It depends on Mn(2+) as a cofactor.

The enzyme catalyses (2R)-2-phosphoglycerate = (2R)-3-phosphoglycerate. The protein operates within carbohydrate degradation; glycolysis; pyruvate from D-glyceraldehyde 3-phosphate: step 3/5. Catalyzes the interconversion of 2-phosphoglycerate and 3-phosphoglycerate. The sequence is that of 2,3-bisphosphoglycerate-independent phosphoglycerate mutase from Malacoplasma penetrans (strain HF-2) (Mycoplasma penetrans).